A 1578-amino-acid chain; its full sequence is DNA-directed RNA polymerase subunit beta' (1578 aa).

Residues Cys-101, Cys-103, Cys-115, and Cys-118 each coordinate Zn(2+). Mg(2+) contacts are provided by Asp-1286, Asp-1288, and Asp-1290.

The protein belongs to the RNA polymerase beta' chain family. RpoC1 subfamily. As to quaternary structure, in plastids the minimal PEP RNA polymerase catalytic core is composed of four subunits: alpha, beta, beta', and beta''. When a (nuclear-encoded) sigma factor is associated with the core the holoenzyme is formed, which can initiate transcription. Mg(2+) serves as cofactor. It depends on Zn(2+) as a cofactor.

It is found in the plastid. Its subcellular location is the chloroplast. The catalysed reaction is RNA(n) + a ribonucleoside 5'-triphosphate = RNA(n+1) + diphosphate. Functionally, DNA-dependent RNA polymerase catalyzes the transcription of DNA into RNA using the four ribonucleoside triphosphates as substrates. The chain is DNA-directed RNA polymerase subunit beta' from Tupiella akineta (Green alga).